The following is an 829-amino-acid chain: Potassium voltage-gated channel unc-103 (829 aa).

The tract at residues 1–76 is disordered; that stretch reads MKTAVFGRDS…PRASHSSRRT (76 aa). Residues 1 to 123 lie on the Cytoplasmic side of the membrane; the sequence is MKTAVFGRDS…YSPFKAVWDW (123 aa). The segment covering 46–66 has biased composition (gly residues); that stretch reads GVSGTGGGGSGGLQGAPGAGG. The chain crosses the membrane as a helical span at residues 124 to 144; that stretch reads IILLLVIYTAVFTPYVAAFLL. The Extracellular portion of the chain corresponds to 145 to 158; it reads RELQDTAKKSRFTE. The chain crosses the membrane as a helical span at residues 159–179; it reads PLEIVDLIVDIMFIVDIIINF. The Cytoplasmic segment spans residues 180–203; that stretch reads RTTYVNENDEACQVVSDPGKIATH. A helical transmembrane segment spans residues 204-224; that stretch reads YFKGWFIIDMVAAVPFDLLLV. Over 225 to 234 the chain is Extracellular; that stretch reads STNSDETTTL. The helical; Voltage-sensor transmembrane segment at 235 to 255 threads the bilayer; it reads IGLLKTARLLRLVRVARKLDR. Topologically, residues 256 to 261 are cytoplasmic; it reads YSEYGA. The helical transmembrane segment at 262–282 threads the bilayer; it reads AVLLLLMATFALIAHWLACIW. The Extracellular segment spans residues 283–327; the sequence is YAIGSAELSHKEYTWLHQLSKQLAQPYTSTNGTIPTGGPTLKSRY. An N-linked (GlcNAc...) asparagine glycan is attached at Asn-313. The pore-forming intramembrane region spans 328-348; the sequence is VTSLYFTLSTITSIGFGNVSA. At 349–354 the chain is on the extracellular side; the sequence is TTDSEK. Residues 355 to 375 form a helical membrane-spanning segment; that stretch reads IFTIIMMILGSLMYASVFGNV. Residues 376 to 829 lie on the Cytoplasmic side of the membrane; it reads SAIIQRLYSG…TPTQETDTIL (454 aa). 458-559 serves as a coordination point for a nucleoside 3',5'-cyclic phosphate; that stretch reads AFAGSTPGCL…ILRDDLLDVL (102 aa). The interval 601-674 is disordered; the sequence is SMNKDRYTTP…PLLRRSTNHH (74 aa). Residues 603 to 615 show a composition bias toward basic and acidic residues; it reads NKDRYTTPPDGDH. Low complexity predominate over residues 640 to 650; it reads SAGSRSSSRCS.

The protein belongs to the potassium channel family. H (Eag) (TC 1.A.1.20) subfamily. Kv11.1/KCNH2 sub-subfamily. In terms of assembly, the potassium channel is composed of a homo- or heterotetrameric complex. Interacts with dnj-1; dnj-1 chaperone promotes tetramerization.

The protein localises to the cell membrane. In terms of biological role, pore-forming (alpha) subunit of voltage-gated inwardly rectifying potassium channel. Channel properties are modulated by cAMP and subunit assembly. Regulates the movements of the male's copulatory spicules before and during male mating behavior. The chain is Potassium voltage-gated channel unc-103 from Caenorhabditis elegans.